The sequence spans 250 residues: Probable phosphatase VIBHAR_04983 (250 aa).

Residues His-8, His-10, His-16, His-41, Glu-74, His-102, His-132, Asp-194, and His-196 each coordinate Zn(2+).

Belongs to the PHP family. Requires Zn(2+) as cofactor.

This is Probable phosphatase VIBHAR_04983 from Vibrio campbellii (strain ATCC BAA-1116).